A 211-amino-acid chain; its full sequence is Large ribosomal subunit protein uL4 (211 aa).

Residues 40–85 (QQAHSRQGTASTLTRSEVRGGGRKPYKQKGTGRARQGSIRTPLRPG) are disordered. Over residues 41–54 (QAHSRQGTASTLTR) the composition is skewed to polar residues. Residues 60–71 (GGRKPYKQKGTG) show a composition bias toward basic residues.

Belongs to the universal ribosomal protein uL4 family. In terms of assembly, part of the 50S ribosomal subunit.

One of the primary rRNA binding proteins, this protein initially binds near the 5'-end of the 23S rRNA. It is important during the early stages of 50S assembly. It makes multiple contacts with different domains of the 23S rRNA in the assembled 50S subunit and ribosome. Functionally, forms part of the polypeptide exit tunnel. This Prochlorococcus marinus (strain NATL2A) protein is Large ribosomal subunit protein uL4.